The chain runs to 1170 residues: DNA-directed RNA polymerase subunit beta (1170 aa).

It belongs to the RNA polymerase beta chain family. In terms of assembly, the RNAP catalytic core consists of 2 alpha, 1 beta, 1 beta' and 1 omega subunit. When a sigma factor is associated with the core the holoenzyme is formed, which can initiate transcription.

It catalyses the reaction RNA(n) + a ribonucleoside 5'-triphosphate = RNA(n+1) + diphosphate. Its function is as follows. DNA-dependent RNA polymerase catalyzes the transcription of DNA into RNA using the four ribonucleoside triphosphates as substrates. The protein is DNA-directed RNA polymerase subunit beta of Corynebacterium urealyticum (strain ATCC 43042 / DSM 7109).